The primary structure comprises 295 residues: Zinc finger C2H2 protein ECU08_0560 (295 aa).

2 consecutive C2H2-type zinc fingers follow at residues 219 to 243 and 249 to 273; these read FVCTYNDCKRAFKRYEHLKRHNLMH and HKCRFPGCSKAFSRSDNLSQHYKVH.

The polypeptide is Zinc finger C2H2 protein ECU08_0560 (Encephalitozoon cuniculi (strain GB-M1) (Microsporidian parasite)).